The sequence spans 300 residues: Jacalin-related lectin 32 (300 aa).

An N-acetylalanine modification is found at Ala-2. Jacalin-type lectin domains lie at Ala-2–Thr-146 and Ala-154–Pro-297.

This sequence belongs to the jacalin lectin family.

Functionally, involved in gametophytic development. The protein is Jacalin-related lectin 32 (JAL32) of Arabidopsis thaliana (Mouse-ear cress).